A 30-amino-acid chain; its full sequence is Cycloviolacin-H1 (30 aa).

Positions 1–30 form a cross-link, cyclopeptide (Gly-Asn); that stretch reads GIPCGESCVYIPCLTSAIGCSCKSKVCYRN. Cystine bridges form between Cys4–Cys20, Cys8–Cys22, and Cys13–Cys27.

The protein belongs to the cyclotide family. Bracelet subfamily. In terms of processing, this is a cyclic peptide.

In terms of biological role, probably participates in a plant defense mechanism. This chain is Cycloviolacin-H1, found in Viola hederacea (Australian violet).